We begin with the raw amino-acid sequence, 204 residues long: MSNKTYVYNAELREQTGTGASRRLRREDKVPAIVYGANKEATSITLDHKDVIKAQESEGFYTQILTLNIGGESVETILKDIQRHPFKPKVTHLDFQRIDANQKLHTIVPIHFVGEDVVEKLGTTVVRQLTEIEISCFPKAIPDFVTVDVSKLVAGDSLHISDVALPAGVSSIDLAKGPGHDQSILIVKANKSAPTEDEAEDAAE.

The protein belongs to the bacterial ribosomal protein bL25 family. CTC subfamily. Part of the 50S ribosomal subunit; part of the 5S rRNA/L5/L18/L25 subcomplex. Contacts the 5S rRNA. Binds to the 5S rRNA independently of L5 and L18.

Its function is as follows. This is one of the proteins that binds to the 5S RNA in the ribosome where it forms part of the central protuberance. The chain is Large ribosomal subunit protein bL25 from Pseudoalteromonas translucida (strain TAC 125).